A 505-amino-acid chain; its full sequence is L-carnitine/gamma-butyrobetaine antiporter (505 aa).

The next 12 helical transmembrane spans lie at 10–30 (IEPKVFFPPLIIVGILCWLTV), 51–71 (WGWAFEWYMIVMLFGWFWLVF), 92–112 (IFMMFASCTSAAVLFWGSIEI), 143–163 (GPLPWATYSFLSVAFAYFFFV), 195–215 (FYLVALIFAMGTSLGLATPLV), 231–251 (LDAIIITCWIILNAICVACGL), 263–283 (SYLSFLMLGWVFIVSGASFIM), 316–336 (WTVFYWAWWVIYAIQMSIFLA), 347–367 (LCFGMVMGLTASTWILWTVLG), 403–423 (LSTATMWGFFILCFIATVTLI), 446–466 (LLVRIGWSVLVGIIGIVLLAL), and 475–495 (AIIAGGCPLFFVNIMVTLSFI).

It belongs to the BCCT transporter (TC 2.A.15) family. CaiT subfamily. Homotrimer.

It is found in the cell inner membrane. It carries out the reaction 4-(trimethylamino)butanoate(in) + (R)-carnitine(out) = 4-(trimethylamino)butanoate(out) + (R)-carnitine(in). It participates in amine and polyamine metabolism; carnitine metabolism. In terms of biological role, catalyzes the exchange of L-carnitine for gamma-butyrobetaine. In Salmonella paratyphi A (strain ATCC 9150 / SARB42), this protein is L-carnitine/gamma-butyrobetaine antiporter.